Consider the following 521-residue polypeptide: Glutamyl-tRNA(Gln) amidotransferase subunit A, mitochondrial (521 aa).

Catalysis depends on charge relay system residues Lys61 and Ser139. Catalysis depends on Ser163, which acts as the Acyl-ester intermediate.

This sequence belongs to the amidase family. GatA subfamily. As to quaternary structure, subunit of the heterotrimeric GatCAB amidotransferase (AdT) complex, composed of A, B and C subunits.

The protein localises to the mitochondrion. It catalyses the reaction L-glutamyl-tRNA(Gln) + L-glutamine + ATP + H2O = L-glutaminyl-tRNA(Gln) + L-glutamate + ADP + phosphate + H(+). In terms of biological role, allows the formation of correctly charged Gln-tRNA(Gln) through the transamidation of misacylated Glu-tRNA(Gln) in the mitochondria. The reaction takes place in the presence of glutamine and ATP through an activated gamma-phospho-Glu-tRNA(Gln). This is Glutamyl-tRNA(Gln) amidotransferase subunit A, mitochondrial from Ajellomyces capsulatus (strain G186AR / H82 / ATCC MYA-2454 / RMSCC 2432) (Darling's disease fungus).